Here is a 479-residue protein sequence, read N- to C-terminus: Cruciferin PGCRURSE5 (479 aa).

The N-terminal stretch at 1–23 (MVKLAHLLVATFGVLLVLNGCLA) is a signal peptide. Cystine bridges form between Cys37/Cys70 and Cys113/Cys296. In terms of domain architecture, Cupin type-1 1 spans 42–241 (LDVLQPTETI…ALKMQLRLAQ (200 aa)). Thr116 bears the Phosphothreonine mark. 3 disordered regions span residues 117–144 (FMDS…GFRD), 196–219 (RTFR…QQQN), and 271–291 (YESE…DNGL). Over residues 124–141 (QGQGQQGQQGQQGQQQQG) the composition is skewed to low complexity. The region spanning 302–451 (ENIDDPARAD…AFQISLEEAR (150 aa)) is the Cupin type-1 2 domain. Residues Thr415 and Thr440 each carry the phosphothreonine modification.

Belongs to the 11S seed storage protein (globulins) family. As to quaternary structure, hexamer; each subunit is composed of an acidic and a basic chain derived from a single precursor and linked by a disulfide bond.

Its function is as follows. This is a seed storage protein. The polypeptide is Cruciferin PGCRURSE5 (CRURS) (Raphanus sativus (Radish)).